We begin with the raw amino-acid sequence, 192 residues long: Putative ripening-related protein 2 (192 aa).

Residues 1–26 (MATTNCLLALAIAGLVLVSLPGLSRG) form the signal peptide.

Belongs to the kiwellin family.

The protein localises to the secreted. This Oryza sativa subsp. japonica (Rice) protein is Putative ripening-related protein 2.